Here is a 310-residue protein sequence, read N- to C-terminus: MRLVFAGTPEPALPSLQRLIDSARHDVIAVLTRPDAAAGRRGRPSPSPVAELAAAHGIPVLKPPRPNSEEFVAELAALAPDCCAVVAYGALLREELLAVPALGWVNLHFSVLPAWRGAAPVQAALAAGDEVTGATTFQIELSLDSGPVYGVVTETIRPTDTAGDLLGRLAESGAGLLEATMDGIEDGTLTAVPQPAEGVSIAPKVSVDDARIRWELPAHVVDRRIRSVTPNPGAWTMAGELRIKVGPVTVPDDGPKDLEPGEIRVGKKHVHVGTATDAVLLGTVQPPGKKSMNAADWARGARAEDIRRAR.

A (6S)-5,6,7,8-tetrahydrofolate-binding site is contributed by 110–113; that stretch reads SVLP. A disordered region spans residues 283–310; the sequence is TVQPPGKKSMNAADWARGARAEDIRRAR. The span at 299-310 shows a compositional bias: basic and acidic residues; the sequence is RGARAEDIRRAR.

Belongs to the Fmt family.

The catalysed reaction is L-methionyl-tRNA(fMet) + (6R)-10-formyltetrahydrofolate = N-formyl-L-methionyl-tRNA(fMet) + (6S)-5,6,7,8-tetrahydrofolate + H(+). Functionally, attaches a formyl group to the free amino group of methionyl-tRNA(fMet). The formyl group appears to play a dual role in the initiator identity of N-formylmethionyl-tRNA by promoting its recognition by IF2 and preventing the misappropriation of this tRNA by the elongation apparatus. This chain is Methionyl-tRNA formyltransferase, found in Mycolicibacterium gilvum (strain PYR-GCK) (Mycobacterium gilvum (strain PYR-GCK)).